A 90-amino-acid polypeptide reads, in one-letter code: Small ribosomal subunit protein uS15 (90 aa).

This sequence belongs to the universal ribosomal protein uS15 family. In terms of assembly, part of the 30S ribosomal subunit. Forms a bridge to the 50S subunit in the 70S ribosome, contacting the 23S rRNA.

In terms of biological role, one of the primary rRNA binding proteins, it binds directly to 16S rRNA where it helps nucleate assembly of the platform of the 30S subunit by binding and bridging several RNA helices of the 16S rRNA. Functionally, forms an intersubunit bridge (bridge B4) with the 23S rRNA of the 50S subunit in the ribosome. The protein is Small ribosomal subunit protein uS15 of Helicobacter pylori (strain HPAG1).